Reading from the N-terminus, the 137-residue chain is Nucleoside diphosphate kinase (137 aa).

ATP contacts are provided by Lys9, Phe57, Arg85, Thr91, Arg102, and Asn112. The Pros-phosphohistidine intermediate role is filled by His115.

The protein belongs to the NDK family. Homotetramer. It depends on Mg(2+) as a cofactor.

The protein resides in the cytoplasm. The catalysed reaction is a 2'-deoxyribonucleoside 5'-diphosphate + ATP = a 2'-deoxyribonucleoside 5'-triphosphate + ADP. It catalyses the reaction a ribonucleoside 5'-diphosphate + ATP = a ribonucleoside 5'-triphosphate + ADP. In terms of biological role, major role in the synthesis of nucleoside triphosphates other than ATP. The ATP gamma phosphate is transferred to the NDP beta phosphate via a ping-pong mechanism, using a phosphorylated active-site intermediate. The sequence is that of Nucleoside diphosphate kinase from Desulfotalea psychrophila (strain LSv54 / DSM 12343).